The sequence spans 309 residues: Porphobilinogen deaminase (309 aa).

Cys244 is modified (S-(dipyrrolylmethanemethyl)cysteine).

This sequence belongs to the HMBS family. Monomer. Dipyrromethane serves as cofactor.

It catalyses the reaction 4 porphobilinogen + H2O = hydroxymethylbilane + 4 NH4(+). Its pathway is porphyrin-containing compound metabolism; protoporphyrin-IX biosynthesis; coproporphyrinogen-III from 5-aminolevulinate: step 2/4. Its function is as follows. Tetrapolymerization of the monopyrrole PBG into the hydroxymethylbilane pre-uroporphyrinogen in several discrete steps. The chain is Porphobilinogen deaminase from Agrobacterium fabrum (strain C58 / ATCC 33970) (Agrobacterium tumefaciens (strain C58)).